Consider the following 138-residue polypeptide: MLSPKRTKFRKQHRGRMKGIATRGNSIAFGKFALQALEPSWITSRQIEAGRRAITRYARRGGKLWIRIFPDKPITMRPAETRMGSGKGSPEYWVSVVKPGRILYEISGVPESVARAAMRIAAYKMPIRTQFITAITSV.

It belongs to the universal ribosomal protein uL16 family. As to quaternary structure, part of the 50S ribosomal subunit.

It is found in the plastid. Its subcellular location is the chloroplast. This Physcomitrium patens (Spreading-leaved earth moss) protein is Large ribosomal subunit protein uL16c.